The sequence spans 307 residues: Ras-related protein RabR (307 aa).

Positions 1 to 10 are enriched in polar residues; the sequence is MTTTTLLSES. Residues 1-45 are disordered; sequence MTTTTLLSESTNNSNNTNNNTNNNTNNTMNNNNNNNNNNTIGNNN. Over residues 11–45 the composition is skewed to low complexity; that stretch reads TNNSNNTNNNTNNNTNNTMNNNNNNNNNNTIGNNN. 61–68 is a binding site for GTP; that stretch reads GDEEVGKG. The short motif at 83 to 92 is the Effector region element; sequence ENLYNIEVDR. 122–126 serves as a coordination point for GTP; that stretch reads NFHMH. A compositionally biased stretch (low complexity) spans 175 to 185; sequence NFNCQSNSRNS. Positions 175–223 are disordered; that stretch reads NFNCQSNSRNSTNYNRHSVGNHCPNSPQKGEKENNTHSSTAPPAPPPLP. The span at 186–202 shows a compositional bias: polar residues; sequence TNYNRHSVGNHCPNSPQ. 230–233 lines the GTP pocket; it reads NKCD. C304 bears the Cysteine methyl ester mark. C304 is lipidated: S-geranylgeranyl cysteine. Residues 305–307 constitute a propeptide, removed in mature form; it reads NLM.

This sequence belongs to the small GTPase superfamily. Rab family.

The protein resides in the cell membrane. The sequence is that of Ras-related protein RabR (rabR) from Dictyostelium discoideum (Social amoeba).